A 1503-amino-acid chain; its full sequence is Lysine-specific demethylase 5B-B (1503 aa).

The region spanning 15 to 56 (CPVFEPSWEEFKDPFAFINKIRPIAEKTGICKVRPPPDWQPP) is the JmjN domain. The 91-residue stretch at 80-170 (TRVKLNFLDQ…ILYPYNLFQS (91 aa)) folds into the ARID domain. Polar residues predominate over residues 202 to 211 (VPLQPSNTSA). Disordered regions lie at residues 202–223 (VPLQ…KTES) and 268–287 (IKEL…NIPP). Basic and acidic residues predominate over residues 268-278 (IKELNPEPEKS). A PHD-type 1 zinc finger spans residues 295 to 345 (LYVCLVCGKGNDEDRLLLCDGCDDSYHTFCLIPPLTDVPKGDWRCPKCLTQ). The JmjC domain occupies 439–605 (KYLQCGWNLN…LGRQCVDHYR (167 aa)). Fe cation is bound by residues His485, Asp488, and His573. The segment at 1168–1216 (LKVCVCQKPAMGAMLQCELCRDAFHSVCVRGPSDPLDPEAWLCPLCLRS) adopts a PHD-type 2 zinc-finger fold. Disordered stretches follow at residues 1362 to 1381 (TNTS…TETD) and 1403 to 1442 (ERGT…DSEE). Residues 1444-1497 (MTLCPAESCLQPEGEEVDWVQCDCCNRWFHMICVGVSAELAAEEDYMCVSCSTS) form a PHD-type 3 zinc finger.

Belongs to the JARID1 histone demethylase family. The cofactor is Fe(2+).

The protein localises to the nucleus. The catalysed reaction is N(6),N(6),N(6)-trimethyl-L-lysyl(4)-[histone H3] + 3 2-oxoglutarate + 3 O2 = L-lysyl(4)-[histone H3] + 3 formaldehyde + 3 succinate + 3 CO2. In terms of biological role, histone demethylase that demethylates 'Lys-4' of histone H3, thereby playing a central role in histone code. Does not demethylate histone H3 'Lys-9' or H3 'Lys-27'. Demethylates trimethylated, dimethylated and monomethylated H3 'Lys-4'. Acts as a transcriptional corepressor. The protein is Lysine-specific demethylase 5B-B (kdm5bb) of Danio rerio (Zebrafish).